The sequence spans 460 residues: Argininosuccinate lyase (460 aa).

This sequence belongs to the lyase 1 family. Argininosuccinate lyase subfamily.

The protein resides in the cytoplasm. It catalyses the reaction 2-(N(omega)-L-arginino)succinate = fumarate + L-arginine. It functions in the pathway amino-acid biosynthesis; L-arginine biosynthesis; L-arginine from L-ornithine and carbamoyl phosphate: step 3/3. In Streptococcus sanguinis (strain SK36), this protein is Argininosuccinate lyase.